The chain runs to 90 residues: Small ribosomal subunit protein uS15 (90 aa).

The protein belongs to the universal ribosomal protein uS15 family. As to quaternary structure, part of the 30S ribosomal subunit. Forms a bridge to the 50S subunit in the 70S ribosome, contacting the 23S rRNA.

One of the primary rRNA binding proteins, it binds directly to 16S rRNA where it helps nucleate assembly of the platform of the 30S subunit by binding and bridging several RNA helices of the 16S rRNA. In terms of biological role, forms an intersubunit bridge (bridge B4) with the 23S rRNA of the 50S subunit in the ribosome. This is Small ribosomal subunit protein uS15 from Campylobacter fetus subsp. fetus (strain 82-40).